Consider the following 296-residue polypeptide: Gamma-D-glutamyl-L-lysine dipeptidyl-peptidase (296 aa).

Substrate is bound by residues Tyr90, 199 to 201 (DCS), and 218 to 219 (DA). Residues 170–295 (KGTAEDIIQT…ELCAVRRCFS (126 aa)) form the NlpC/P60 domain. Cys200 acts as the Nucleophile in catalysis. His253 serves as the catalytic Proton acceptor. Residue His265 is part of the active site.

Belongs to the peptidase C40 family.

The catalysed reaction is The enzyme releases L-Ala-gamma-D-Glu dipeptides from cell wall peptides via cleavage of an L-Ala-gamma-D-Glu-|-L-Lys bond.. It participates in cell wall degradation; peptidoglycan degradation. Specifically hydrolyzes gamma-D-glutamyl-L-lysine bonds in murein peptides, releasing L-Ala-D-Glu. The protein is Gamma-D-glutamyl-L-lysine dipeptidyl-peptidase (ykfC) of Bacillus subtilis (strain 168).